Here is a 418-residue protein sequence, read N- to C-terminus: Serine hydroxymethyltransferase (418 aa).

(6S)-5,6,7,8-tetrahydrofolate-binding positions include Leu121 and 125-127 (GHL). An N6-(pyridoxal phosphate)lysine modification is found at Lys230. 356-358 (SPF) contacts (6S)-5,6,7,8-tetrahydrofolate.

This sequence belongs to the SHMT family. In terms of assembly, homodimer. Requires pyridoxal 5'-phosphate as cofactor.

It localises to the cytoplasm. It catalyses the reaction (6R)-5,10-methylene-5,6,7,8-tetrahydrofolate + glycine + H2O = (6S)-5,6,7,8-tetrahydrofolate + L-serine. The protein operates within one-carbon metabolism; tetrahydrofolate interconversion. Its pathway is amino-acid biosynthesis; glycine biosynthesis; glycine from L-serine: step 1/1. In terms of biological role, catalyzes the reversible interconversion of serine and glycine with tetrahydrofolate (THF) serving as the one-carbon carrier. This reaction serves as the major source of one-carbon groups required for the biosynthesis of purines, thymidylate, methionine, and other important biomolecules. Also exhibits THF-independent aldolase activity toward beta-hydroxyamino acids, producing glycine and aldehydes, via a retro-aldol mechanism. The protein is Serine hydroxymethyltransferase of Pseudoalteromonas translucida (strain TAC 125).